A 348-amino-acid chain; its full sequence is Putative S-adenosyl-L-methionine-dependent methyltransferase MRA_3439 (348 aa).

Residues Asp-171 and 200–201 (DL) each bind S-adenosyl-L-methionine.

This sequence belongs to the UPF0677 family.

Functionally, exhibits S-adenosyl-L-methionine-dependent methyltransferase activity. In Mycobacterium tuberculosis (strain ATCC 25177 / H37Ra), this protein is Putative S-adenosyl-L-methionine-dependent methyltransferase MRA_3439.